The primary structure comprises 638 residues: Probable inactive receptor kinase At4g23740 (638 aa).

The first 24 residues, 1–24 (MEALRIYLWSLCLSLCLIIYGANS), serve as a signal peptide directing secretion. LRR repeat units follow at residues 94-117 (ALRVLSLRSNLISGEFPKDFVELK), 118-139 (DLAFLYLQDNNLSGPLPLDFSV), 142-165 (NLTSVNLSNNGFNGTIPSSLSRLK), 166-188 (RIQSLNLANNTLSGDIPDLSVLS), and 189-198 (SLQHIDLSNN). Residues 257–277 (VFLLIVIAVSIVVITALAFVL) form a helical membrane-spanning segment. Residues 337-608 (RASAEVLGKG…SDLVRLIENV (272 aa)) form the Protein kinase domain. The residue at position 339 (S339) is a Phosphoserine. Residue 343-351 (LGKGTFGTT) participates in ATP binding. Residue T360 is modified to Phosphothreonine. K365 lines the ATP pocket. 2 positions are modified to phosphoserine: S416 and S419. Phosphothreonine is present on residues T436 and T509. S513 is modified (phosphoserine). The segment at 612–638 (RTSIEPEPELKPKSENGASETSTPSEI) is disordered. Over residues 613-625 (TSIEPEPELKPKS) the composition is skewed to basic and acidic residues. A compositionally biased stretch (polar residues) spans 627–638 (NGASETSTPSEI).

Belongs to the protein kinase superfamily.

The protein resides in the membrane. This is Probable inactive receptor kinase At4g23740 from Arabidopsis thaliana (Mouse-ear cress).